The chain runs to 129 residues: Small ribosomal subunit protein uS11 (129 aa).

It belongs to the universal ribosomal protein uS11 family. Part of the 30S ribosomal subunit. Interacts with proteins S7 and S18. Binds to IF-3.

Its function is as follows. Located on the platform of the 30S subunit, it bridges several disparate RNA helices of the 16S rRNA. Forms part of the Shine-Dalgarno cleft in the 70S ribosome. This Hamiltonella defensa subsp. Acyrthosiphon pisum (strain 5AT) protein is Small ribosomal subunit protein uS11.